The chain runs to 172 residues: Small ribosomal subunit protein uS5 (172 aa).

The region spanning 17-80 (LREKMISVNR…EQARRNMFKV (64 aa)) is the S5 DRBM domain.

Belongs to the universal ribosomal protein uS5 family. As to quaternary structure, part of the 30S ribosomal subunit. Contacts proteins S4 and S8.

In terms of biological role, with S4 and S12 plays an important role in translational accuracy. Located at the back of the 30S subunit body where it stabilizes the conformation of the head with respect to the body. The polypeptide is Small ribosomal subunit protein uS5 (Burkholderia thailandensis (strain ATCC 700388 / DSM 13276 / CCUG 48851 / CIP 106301 / E264)).